A 611-amino-acid chain; its full sequence is Vitamin B12 transporter BtuB (611 aa).

An N-terminal signal peptide occupies residues M1–A22. A TonB box motif is present at residues E29–N36. The region spanning K41–K154 is the TBDR plug domain. The 453-residue stretch at Q159 to F611 folds into the TBDR beta-barrel domain. Positions N594 to F611 match the TonB C-terminal box motif.

The protein belongs to the TonB-dependent receptor family. BtuB (TC 1.B.14.3.1) subfamily.

It localises to the cell outer membrane. In terms of biological role, involved in the active translocation of vitamin B12 (cyanocobalamin) across the outer membrane to the periplasmic space. It derives its energy for transport by interacting with the trans-periplasmic membrane protein TonB. This Vibrio cholerae serotype O1 (strain ATCC 39541 / Classical Ogawa 395 / O395) protein is Vitamin B12 transporter BtuB.